Consider the following 472-residue polypeptide: Aspartyl/glutamyl-tRNA(Asn/Gln) amidotransferase subunit B (472 aa).

The protein belongs to the GatB/GatE family. GatB subfamily. As to quaternary structure, heterotrimer of A, B and C subunits.

The catalysed reaction is L-glutamyl-tRNA(Gln) + L-glutamine + ATP + H2O = L-glutaminyl-tRNA(Gln) + L-glutamate + ADP + phosphate + H(+). The enzyme catalyses L-aspartyl-tRNA(Asn) + L-glutamine + ATP + H2O = L-asparaginyl-tRNA(Asn) + L-glutamate + ADP + phosphate + 2 H(+). In terms of biological role, allows the formation of correctly charged Asn-tRNA(Asn) or Gln-tRNA(Gln) through the transamidation of misacylated Asp-tRNA(Asn) or Glu-tRNA(Gln) in organisms which lack either or both of asparaginyl-tRNA or glutaminyl-tRNA synthetases. The reaction takes place in the presence of glutamine and ATP through an activated phospho-Asp-tRNA(Asn) or phospho-Glu-tRNA(Gln). The protein is Aspartyl/glutamyl-tRNA(Asn/Gln) amidotransferase subunit B of Campylobacter jejuni (strain RM1221).